The following is a 269-amino-acid chain: Sulfur carrier protein FdhD (269 aa).

Cys-111 (cysteine persulfide intermediate) is an active-site residue.

It belongs to the FdhD family.

The protein resides in the cytoplasm. In terms of biological role, required for formate dehydrogenase (FDH) activity. Acts as a sulfur carrier protein that transfers sulfur from IscS to the molybdenum cofactor prior to its insertion into FDH. This chain is Sulfur carrier protein FdhD, found in Brucella melitensis biotype 1 (strain ATCC 23456 / CCUG 17765 / NCTC 10094 / 16M).